The sequence spans 345 residues: GTPase Obg (345 aa).

Positions M1–L159 constitute an Obg domain. The interval G121–G142 is disordered. The region spanning A160–G327 is the OBG-type G domain. Residues G166–S173, F191–R195, D212–G215, N279–D282, and S308–A310 contribute to the GTP site. Mg(2+) is bound by residues S173 and T193.

Belongs to the TRAFAC class OBG-HflX-like GTPase superfamily. OBG GTPase family. Monomer. Mg(2+) serves as cofactor.

Its subcellular location is the cytoplasm. In terms of biological role, an essential GTPase which binds GTP, GDP and possibly (p)ppGpp with moderate affinity, with high nucleotide exchange rates and a fairly low GTP hydrolysis rate. Plays a role in control of the cell cycle, stress response, ribosome biogenesis and in those bacteria that undergo differentiation, in morphogenesis control. The sequence is that of GTPase Obg from Rhizorhabdus wittichii (strain DSM 6014 / CCUG 31198 / JCM 15750 / NBRC 105917 / EY 4224 / RW1) (Sphingomonas wittichii).